Here is a 992-residue protein sequence, read N- to C-terminus: METNFEDSKSLDEPVLHDIAIALLKNDYWSLYLSPEQKRKYISILNDTLLWNRFINVIEWDKLCDEKDSNGSNDDEEDDLDITTLFRCRCMIFDAKINPALFDLSSTSSGSIEHVDHQNISLEASLAEEEERKKGDAKKSEATGRQLFDDDDFDESDAEDSSKATITLDLQKDKSLRKSIIDLKSVDIDDMDTSGFAAIESNKALSNISFNYVYYTLENDSENINEVKKFEDEEDTSTPNTSSFQNNSSSLDLSDNLSLNSKFGSLTSSFKYLLQYLEGNRSKINATDADVKQLLSDVKKNKSKWANDQRIGQEELYEAAEKVVLELRSYTEHSLAFLTKVSKRDAPDYYTVIKEPMDLGTILRNLKNLHYNSKKEFVHDLMLIWSNCFLYNSHPDHPLRVHAQFMKDKSLELINLIPDIVIQSRKDYDDSLIEAELESDEESTAETSKHVTSKKTSSRGGQTQQAVEVHTDANSPEENNTPVTKKEVETSKPPAVSGSTPPVNEAAVIESSNTLEKEPLSDVATEYWKIKTKDIRESHILNNRRILKSLQFIETELPMIRKPTAMSAFIDREVAYGSIDCLPMDKGDFEPIMKLDTTPLLEYDVGSGVPMTAGSVLETESEEDLYFRDYSLFEINRNTPGVPSLMYKNIAKMQEIRKLCNKIQTVRQLQLPQPFYYEHHKSHVPFANNEPILLDIPQNYDNMSSFKPLAHDVLKKLCTIILFHAGFESFQMGALDALTEIAADYMAKMGAVMDQYLIYGKDKSQQEIVGQTLGELGVDDVNDLISYVYHDVERQSVKLLEIHQRLQRHFVELLRPALSERNDEEAIFNQNGESFVTGNFSYETGDDFFGLRELGLDRELGLDSLSVPLHLLQSRLRSNMSWQPEATIKGDQEYAPPPKYPPITAESISNEIGLIQGFLKKNLEEFGLDELLEDEDIRPRSKPPRPRLPPNGKITTGRKRIASSVFLNQSLRKKRCLKENEQGTEVTTLPEE.

2 disordered regions span residues 124–162 and 230–249; these read ASLA…EDSS and FEDE…NNSS. Basic and acidic residues predominate over residues 130–142; sequence EERKKGDAKKSEA. Residues 149-159 show a composition bias toward acidic residues; the sequence is DDDDFDESDAE. Positions 311 to 417 constitute a Bromo domain; sequence IGQEELYEAA…DKSLELINLI (107 aa). Disordered regions lie at residues 436-502 and 934-956; these read ELES…STPP and DEDI…KITT. A compositionally biased stretch (polar residues) spans 459 to 483; that stretch reads RGGQTQQAVEVHTDANSPEENNTPV. Ser-475 is subject to Phosphoserine.

In terms of assembly, component of the 1.8 MDa SAGA (Spt-Ada-Gcn5 acetyltransferase) complex, which is composed of 19 subunits tra1, spt7, taf5, ngg1/ada3, sgf73, spt20, spt8, taf12, taf6, hfi1/ada1, ubp8, gcn5, ada2, spt3, sgf29, taf10, taf9, sgf11 and sus1. The SAGA complex is composed of 4 modules, namely the HAT (histone acetyltransferase) module (gcn5, ada2, ngg1/ada3 and sgf29), the DUB (deubiquitinating) module (ubp8, sgf11, sgf73 and sus1), the core or TAF (TBP-associated factor) module (taf5, taf6, taf9, taf10 and taf12), and the Tra1 or SPT (Suppressor of Ty) module (tra1, hfi1/ada1, spt3, spt7, spt8 and spt20). The Tra1/SPT module binds activators, the core module recruits TBP (TATA-binding protein), the HAT module contains the histone H3 acetyltransferase gcn5, and the DUB module comprises the histone H2B deubiquitinase ubp8.

Its subcellular location is the nucleus. Its function is as follows. Essential scaffold subunit of the transcription coactivator SAGA complex. SAGA acts as a general cofactor required for essentially all RNA polymerase II transcription. At the promoters, SAGA is required for transcription pre-initiation complex (PIC) recruitment. It influences RNA polymerase II transcriptional activity through different activities such as TBP interaction (via core/TAF module) and promoter selectivity, interaction with transcription activators (via Tra1/SPT module), and chromatin modification through histone acetylation (via HAT module) and deubiquitination (via DUB module). SAGA preferentially acetylates histones H3 (to form H3K9ac, H3K14ac, H3K18ac and H3K23ac) and H2B and deubiquitinates histone H2B. SAGA interacts with DNA via upstream activating sequences (UASs). The sequence is that of SAGA complex subunit Spt7 (spt7) from Schizosaccharomyces pombe (strain 972 / ATCC 24843) (Fission yeast).